The sequence spans 574 residues: uncharacterized protein (574 aa).

Residues 297–317 (SAASKPRKRKKDEVSGAQVNS) are disordered.

This is an uncharacterized protein from Mus musculus (Mouse).